The chain runs to 161 residues: Cyclic pyranopterin monophosphate synthase (161 aa).

Substrate-binding positions include 75–77 (LCH) and 113–114 (ME). Aspartate 128 is a catalytic residue.

This sequence belongs to the MoaC family. Homohexamer; trimer of dimers.

It carries out the reaction (8S)-3',8-cyclo-7,8-dihydroguanosine 5'-triphosphate = cyclic pyranopterin phosphate + diphosphate. Its pathway is cofactor biosynthesis; molybdopterin biosynthesis. In terms of biological role, catalyzes the conversion of (8S)-3',8-cyclo-7,8-dihydroguanosine 5'-triphosphate to cyclic pyranopterin monophosphate (cPMP). In Escherichia coli O9:H4 (strain HS), this protein is Cyclic pyranopterin monophosphate synthase.